The primary structure comprises 956 residues: DNA repair endonuclease UVH1 (956 aa).

The Nuclear localization signal signature appears at 256 to 272 (RRQLDPIWHTLGKRTKQ). 3 disordered regions span residues 343 to 363 (HVKNKSGKKRNSKGETDSVEA), 516 to 593 (TTDM…RPSG), and 697 to 718 (SSTEFPASSTQNSLTRKAGGRK). The segment covering 697–711 (SSTEFPASSTQNSLT) has biased composition (polar residues). In terms of domain architecture, ERCC4 spans 725 to 805 (QVIVDMREFM…IPVLLIEFSQ (81 aa)).

The protein belongs to the XPF family. Heterodimer with ERCC1/RAD10. As to expression, isoform 1 and isoform 2 are widely expressed, predominantly in flowers, meristems and stems. Isoform 3 is detected at low levels.

Its subcellular location is the nucleus. Functionally, seems to be involved in nucleotide excision repair (NER) of damaged DNA (dark repair mechanism). Involved in repair of UV light, and probably oxidative damage. The UVH1/RAD1-ERCC1/RAD10 complex may act as an endonuclease making DNA incision 5' to the lesion site. In vitro, is implicated in double strand breaks (DSBs) repair and is required for homologous recombination in the presence of non-homologous overhangs. May mediate the induction of a DNA-damage sensitive cell-cycle checkpoint during the G2 phase. The polypeptide is DNA repair endonuclease UVH1 (UVH1) (Arabidopsis thaliana (Mouse-ear cress)).